A 527-amino-acid polypeptide reads, in one-letter code: DNA polymerase epsilon subunit 2 (527 aa).

It belongs to the DNA polymerase epsilon subunit B family. Component of the DNA polymerase epsilon complex consisting of four subunits: the catalytic subunit POLE and the accessory subunits POLE2, POLE3 and POLE4.

The protein localises to the nucleus. Its function is as follows. Accessory component of the DNA polymerase epsilon complex. Participates in DNA repair and in chromosomal DNA replication. The chain is DNA polymerase epsilon subunit 2 (POLE2) from Bos taurus (Bovine).